The following is a 247-amino-acid chain: C-type lectin domain family 7 member A (247 aa).

Residues 1–44 are Cytoplasmic-facing; the sequence is MEYQSSVENLDEDGYTQLDFSSRNITRRSVVSEKGLCAASSHWR. An ITAM-like motif is present at residues 15–18; sequence YTQL. A helical; Signal-anchor for type II membrane protein membrane pass occupies residues 45–65; sequence LIAVTLGILCSVMLVITVVLS. The Extracellular portion of the chain corresponds to 66–247; that stretch reads TSGIWRSSSG…YSICEKKLSV (182 aa). Polar residues predominate over residues 81 to 101; the sequence is SDSFPSRNKDNQSQPTQSSLE. A disordered region spans residues 81–103; it reads SDSFPSRNKDNQSQPTQSSLEDS. A glycan (N-linked (GlcNAc...) asparagine) is linked at asparagine 91. Intrachain disulfides connect cysteine 120–cysteine 131, cysteine 148–cysteine 241, and cysteine 220–cysteine 233. A C-type lectin domain is found at 127 to 242; that stretch reads HEDSCYLFST…CSVHSYSICE (116 aa). Position 146-153 (146-153) interacts with (1,3-beta-D-glucosyl)n; sequence RQCFQLGS. A divalent metal cation is bound by residues lysine 157, aspartate 159, and glutamate 163. Glutamate 195 is a binding site for (1,3-beta-D-glucosyl)n. Position 242 (glutamate 242) interacts with a divalent metal cation.

As to quaternary structure, homodimer. Interacts with SYK; participates in leukocyte activation in presence of fungal pathogens. Interacts with CD37; this interaction controls CLEC7A-mediated IL-6 production. Post-translationally, phosphorylated on tyrosine residues in response to beta-glucan binding. As to expression, detected in bone marrow, monocytes, macrophages, dendritic cells and natural killer cells.

The protein resides in the cell membrane. Functionally, lectin that functions as a pattern recognizing receptor (PRR) specific for beta-1,3-linked and beta-1,6-linked glucans, which constitute cell wall constituents from pathogenic bacteria and fungi. Necessary for the TLR2-mediated inflammatory response and activation of NF-kappa-B: upon beta-glucan binding, recruits SYK via its ITAM motif and promotes a signaling cascade that activates some CARD domain-BCL10-MALT1 (CBM) signalosomes, leading to the activation of NF-kappa-B and MAP kinase p38 (MAPK11, MAPK12, MAPK13 and/or MAPK14) pathways which stimulate expression of genes encoding pro-inflammatory cytokines and chemokines. Enhances cytokine production in macrophages and dendritic cells. Mediates production of reactive oxygen species in the cell. Mediates phagocytosis of C.albicans conidia. Binds T-cells in a way that does not involve their surface glycans and plays a role in T-cell activation. Stimulates T-cell proliferation. Induces phosphorylation of SCIMP after binding beta-glucans. This chain is C-type lectin domain family 7 member A (CLEC7A), found in Bos taurus (Bovine).